A 493-amino-acid polypeptide reads, in one-letter code: Cobyric acid synthase (493 aa).

The GATase cobBQ-type domain occupies proline 246–phenylalanine 440. Cysteine 326 functions as the Nucleophile in the catalytic mechanism. Histidine 432 is an active-site residue.

The protein belongs to the CobB/CobQ family. CobQ subfamily.

The protein operates within cofactor biosynthesis; adenosylcobalamin biosynthesis. In terms of biological role, catalyzes amidations at positions B, D, E, and G on adenosylcobyrinic A,C-diamide. NH(2) groups are provided by glutamine, and one molecule of ATP is hydrogenolyzed for each amidation. This chain is Cobyric acid synthase, found in Clostridium botulinum (strain Okra / Type B1).